The primary structure comprises 83 residues: Small ribosomal subunit protein bS16 (83 aa).

Belongs to the bacterial ribosomal protein bS16 family.

The polypeptide is Small ribosomal subunit protein bS16 (Ectopseudomonas mendocina (strain ymp) (Pseudomonas mendocina)).